Here is an 814-residue protein sequence, read N- to C-terminus: DNA topoisomerase 1 (814 aa).

A compositionally biased stretch (low complexity) spans 1–12 (MSSSDSDSVSLS). The segment at 1–180 (MSSSDSDSVS…PNDEEDEDED (180 aa)) is disordered. The segment covering 13 to 22 (IRRRQRRGSS) has biased composition (basic residues). A phosphoserine mark is found at serine 52, serine 54, and serine 136. Threonine 138 is modified (phosphothreonine). Interaction with DNA regions lie at residues 404–405 (KY), 467–472 (RAGNEK), and 559–561 (SAK). Positions 411 to 814 (GSSLKGQSDL…AADTPPDWKW (404 aa)) constitute a Topo IB-type catalytic domain. The active-site O-(3'-phospho-DNA)-tyrosine intermediate is the tyrosine 773.

The protein belongs to the type IB topoisomerase family. As to quaternary structure, monomer.

It catalyses the reaction ATP-independent breakage of single-stranded DNA, followed by passage and rejoining.. Its function is as follows. Releases the supercoiling and torsional tension of DNA introduced during the DNA replication and transcription by transiently cleaving and rejoining one strand of the DNA duplex. Introduces a single-strand break via transesterification at a target site in duplex DNA. The scissile phosphodiester is attacked by the catalytic tyrosine of the enzyme, resulting in the formation of a DNA-(3'-phosphotyrosyl)-enzyme intermediate and the expulsion of a 5'-OH DNA strand. TThe free DNA strand then rotates around the intact phosphodiester bond on the opposing strand, thus removing DNA supercoils. Finally, in the religation step, the DNA 5'-OH attacks the covalent intermediate to expel the active-site tyrosine and restore the DNA phosphodiester backbone. The polypeptide is DNA topoisomerase 1 (top1) (Schizosaccharomyces pombe (strain 972 / ATCC 24843) (Fission yeast)).